The sequence spans 99 residues: Malonate decarboxylase acyl carrier protein (99 aa).

Serine 25 is modified (O-(phosphoribosyl dephospho-coenzyme A)serine).

Belongs to the MdcC family. Post-translationally, covalently binds the prosthetic group of malonate decarboxylase.

The protein resides in the cytoplasm. In terms of biological role, subunit of malonate decarboxylase, it is an acyl carrier protein to which acetyl and malonyl thioester residues are bound via a 2'-(5''-phosphoribosyl)-3'-dephospho-CoA prosthetic group and turn over during the catalytic mechanism. The sequence is that of Malonate decarboxylase acyl carrier protein from Pseudomonas putida (strain W619).